The following is an 859-amino-acid chain: Homeobox-leucine zipper protein HOX32 (859 aa).

The disordered stretch occupies residues A7–G31. Positions D29–K92 form a DNA-binding region, homeobox. Positions V100–N129 form a coiled coil. Positions T146 to A164 are enriched in polar residues. Residues T146–A172 form a disordered region. The 223-residue stretch at D171–E393 folds into the START domain.

Belongs to the HD-ZIP homeobox family. Class III subfamily. In terms of tissue distribution, expressed in seedlings, roots, stems, leaf sheaths and blades and panicles.

The protein localises to the nucleus. Functionally, probable transcription factor. This is Homeobox-leucine zipper protein HOX32 (HOX32) from Oryza sativa subsp. indica (Rice).